The chain runs to 92 residues: UPF0223 protein SP_1404 (92 aa).

Belongs to the UPF0223 family.

The polypeptide is UPF0223 protein SP_1404 (Streptococcus pneumoniae serotype 4 (strain ATCC BAA-334 / TIGR4)).